We begin with the raw amino-acid sequence, 202 residues long: Holliday junction branch migration complex subunit RuvA (202 aa).

The domain I stretch occupies residues 1-64 (MIGRLSGTLL…EDAHLLFGFA (64 aa)). The segment at 65-143 (GRAERELFRQ…SLPSADLLSP (79 aa)) is domain II. Residues 144–152 (APAAGAALL) form a flexible linker region. Residues 153–202 (VENDERADISQALQALGYSAREAEAALKSVPDGTDVATGIRLALKALARP) form a domain III region.

Belongs to the RuvA family. In terms of assembly, homotetramer. Forms an RuvA(8)-RuvB(12)-Holliday junction (HJ) complex. HJ DNA is sandwiched between 2 RuvA tetramers; dsDNA enters through RuvA and exits via RuvB. An RuvB hexamer assembles on each DNA strand where it exits the tetramer. Each RuvB hexamer is contacted by two RuvA subunits (via domain III) on 2 adjacent RuvB subunits; this complex drives branch migration. In the full resolvosome a probable DNA-RuvA(4)-RuvB(12)-RuvC(2) complex forms which resolves the HJ.

The protein resides in the cytoplasm. Functionally, the RuvA-RuvB-RuvC complex processes Holliday junction (HJ) DNA during genetic recombination and DNA repair, while the RuvA-RuvB complex plays an important role in the rescue of blocked DNA replication forks via replication fork reversal (RFR). RuvA specifically binds to HJ cruciform DNA, conferring on it an open structure. The RuvB hexamer acts as an ATP-dependent pump, pulling dsDNA into and through the RuvAB complex. HJ branch migration allows RuvC to scan DNA until it finds its consensus sequence, where it cleaves and resolves the cruciform DNA. The sequence is that of Holliday junction branch migration complex subunit RuvA from Laribacter hongkongensis (strain HLHK9).